Reading from the N-terminus, the 747-residue chain is Phosphoribosylformylglycinamidine synthase subunit PurL (747 aa).

H46 is an active-site residue. Positions 49 and 88 each coordinate ATP. A Mg(2+)-binding site is contributed by E90. Substrate is bound by residues 91-94 (SHNH) and R113. H92 acts as the Proton acceptor in catalysis. D114 provides a ligand contact to Mg(2+). Q237 provides a ligand contact to substrate. D265 is a Mg(2+) binding site. 309–311 (ESQ) contacts substrate. 2 residues coordinate ATP: D493 and G530. N531 contacts Mg(2+). A substrate-binding site is contributed by S533.

This sequence belongs to the FGAMS family. In terms of assembly, monomer. Part of the FGAM synthase complex composed of 1 PurL, 1 PurQ and 2 PurS subunits.

Its subcellular location is the cytoplasm. It carries out the reaction N(2)-formyl-N(1)-(5-phospho-beta-D-ribosyl)glycinamide + L-glutamine + ATP + H2O = 2-formamido-N(1)-(5-O-phospho-beta-D-ribosyl)acetamidine + L-glutamate + ADP + phosphate + H(+). The protein operates within purine metabolism; IMP biosynthesis via de novo pathway; 5-amino-1-(5-phospho-D-ribosyl)imidazole from N(2)-formyl-N(1)-(5-phospho-D-ribosyl)glycinamide: step 1/2. Functionally, part of the phosphoribosylformylglycinamidine synthase complex involved in the purines biosynthetic pathway. Catalyzes the ATP-dependent conversion of formylglycinamide ribonucleotide (FGAR) and glutamine to yield formylglycinamidine ribonucleotide (FGAM) and glutamate. The FGAM synthase complex is composed of three subunits. PurQ produces an ammonia molecule by converting glutamine to glutamate. PurL transfers the ammonia molecule to FGAR to form FGAM in an ATP-dependent manner. PurS interacts with PurQ and PurL and is thought to assist in the transfer of the ammonia molecule from PurQ to PurL. This chain is Phosphoribosylformylglycinamidine synthase subunit PurL, found in Deinococcus radiodurans (strain ATCC 13939 / DSM 20539 / JCM 16871 / CCUG 27074 / LMG 4051 / NBRC 15346 / NCIMB 9279 / VKM B-1422 / R1).